Reading from the N-terminus, the 350-residue chain is Anthranilate phosphoribosyltransferase (350 aa).

5-phospho-alpha-D-ribose 1-diphosphate is bound by residues G94, 97-98 (GS), T102, 104-107 (NVST), 122-130 (KHGNRSVSS), and S134. G94 contacts anthranilate. S106 provides a ligand contact to Mg(2+). Anthranilate is bound at residue N125. R180 provides a ligand contact to anthranilate. 2 residues coordinate Mg(2+): D239 and E240.

The protein belongs to the anthranilate phosphoribosyltransferase family. In terms of assembly, homodimer. Mg(2+) is required as a cofactor.

It catalyses the reaction N-(5-phospho-beta-D-ribosyl)anthranilate + diphosphate = 5-phospho-alpha-D-ribose 1-diphosphate + anthranilate. Its pathway is amino-acid biosynthesis; L-tryptophan biosynthesis; L-tryptophan from chorismate: step 2/5. Catalyzes the transfer of the phosphoribosyl group of 5-phosphorylribose-1-pyrophosphate (PRPP) to anthranilate to yield N-(5'-phosphoribosyl)-anthranilate (PRA). This chain is Anthranilate phosphoribosyltransferase, found in Geotalea uraniireducens (strain Rf4) (Geobacter uraniireducens).